Here is a 921-residue protein sequence, read N- to C-terminus: MTANRDAALSSHRHPGCAQRPRTPTFASSSQRRSAFGFDDGNFPGLGERSHAPGSRLGARRRAKTARGLRGHRQRGAGAGLSRPGSARAPSPPRPGGPENPGGVLSVELPGLLAQLARSFALLLPVYALGYLGLSFSWVLLALALLAWCRRSRGLKALRLCRALALLEDEERVVRLGVRACDLPAWVHFPDTERAEWLNKTVKHMWPFICQFIEKLFRETIEPAVRGANTHLSTFSFTKVDVGQQPLRINGVKVYTENVDKRQIILDLQISFVGNCEIDLEIKRYFCRAGVKSIQIHGTMRVILEPLIGDMPLVGALSIFFLRKPLLEINWTGLTNLLDVPGLNGLSDTIILDIISNYLVLPNRITVPLVSEVQIAQLRFPVPKGVLRIHFIEAQDLQGKDTYLKGLVKGKSDPYGIIRVGNQIFQSRVIKENLSPKWNEVYEALVYEHPGQELEIELFDEDPDKDDFLGSLMIDLIEVEKERLLDEWFTLDEVPKGKLHLRLEWLTLMPNASNLDKVLTDIKADKDQANDGLSSALLILYLDSARNLPSGKKISSNPNPVVQMSVGHKAQESKIRYKTNEPVWEENFTFFIHNPKRQDLEVEVRDEQHQCSLGNLKVPLSQLLTSEDMTVSQRFQLSNSGPNSTIKMKIALRVLHLEKRERPPDHQHSAQVKRPSVSKEGRKTSIKSHMSGSPGPGGSNTAPSTPVIGGSDKPGMEEKAQPPEAGPQGLHDLGRSSSSLLASPGHISVKEPTPSIASDISLPIATQELRQRLRQLENGTTLGQSPLGQIQLTIRHSSQRNKLIVVVHACRNLIAFSEDGSDPYVRMYLLPDKRRSGRRKTHVSKKTLNPVFDQSFDFSVSLPEVQRRTLDVAVKNSGGFLSKDKGLLGKVLVALASEELAKGWTQWYDLTEDGTRPQAMT.

Over 1–103 (MTANRDAALS…RPGGPENPGG (103 aa)) the chain is Cytoplasmic. A disordered region spans residues 1–103 (MTANRDAALS…RPGGPENPGG (103 aa)). Over residues 58-75 (GARRRAKTARGLRGHRQR) the composition is skewed to basic residues. Residues 104 to 124 (VLSVELPGLLAQLARSFALLL) traverse the membrane as a helical segment. At 125–127 (PVY) the chain is on the lumenal side. The helical transmembrane segment at 128–148 (ALGYLGLSFSWVLLALALLAW) threads the bilayer. Topologically, residues 149 to 921 (CRRSRGLKAL…EDGTRPQAMT (773 aa)) are cytoplasmic. One can recognise an SMP-LTD domain in the interval 191 to 370 (DTERAEWLNK…LPNRITVPLV (180 aa)). 2 consecutive C2 domains span residues 369–489 (LVSE…DEWF) and 514–639 (NLDK…QLSN). Residues Lys400, Asp401, Asp413, Asp460, Glu461, Asp462, Asp464, Asp466, and Asp467 each contribute to the Ca(2+) site. A disordered region spans residues 660 to 754 (RERPPDHQHS…GHISVKEPTP (95 aa)). Residues Ser691 and Ser693 each carry the phosphoserine modification. Thr705 is subject to Phosphothreonine. A phosphoserine mark is found at Ser736, Ser738, Ser739, Ser743, Ser748, Ser755, Ser758, and Ser761. The region spanning 786 to 908 (PLGQIQLTIR…ELAKGWTQWY (123 aa)) is the C2 3 domain. The segment at 833–840 (KRRSGRRK) is required for phosphatidylinositol 4,5-bisphosphate-dependent location at the cell membrane.

Belongs to the extended synaptotagmin family. As to quaternary structure, homodimer. Interacts with ESYT1 and ESYT3. Interacts with FGFR1 that has been activated by FGF1 binding. Interacts with the AP-2 complex; identified in a complex with the AP-2 complex and FGFR1. In terms of tissue distribution, widely expressed with high level in cerebellum.

The protein localises to the cell membrane. Its subcellular location is the endoplasmic reticulum membrane. Functionally, tethers the endoplasmic reticulum to the cell membrane and promotes the formation of appositions between the endoplasmic reticulum and the cell membrane. Binds glycerophospholipids in a barrel-like domain and may play a role in cellular lipid transport. Plays a role in FGF signaling via its role in the rapid internalization of FGFR1 that has been activated by FGF1 binding; this occurs most likely via the AP-2 complex. Promotes the localization of SACM1L at endoplasmic reticulum-plasma membrane contact sites (EPCS). In Homo sapiens (Human), this protein is Extended synaptotagmin-2.